We begin with the raw amino-acid sequence, 391 residues long: tRNA-specific 2-thiouridylase MnmA (391 aa).

ATP-binding positions include 20 to 27 and Leu46; that span reads AMSGGVDS. The active-site Nucleophile is the Cys114. A disulfide bridge links Cys114 with Cys210. Gly138 contacts ATP. The interaction with tRNA stretch occupies residues 160-162; the sequence is RDQ. The active-site Cysteine persulfide intermediate is Cys210.

This sequence belongs to the MnmA/TRMU family.

The protein resides in the cytoplasm. It carries out the reaction S-sulfanyl-L-cysteinyl-[protein] + uridine(34) in tRNA + AH2 + ATP = 2-thiouridine(34) in tRNA + L-cysteinyl-[protein] + A + AMP + diphosphate + H(+). In terms of biological role, catalyzes the 2-thiolation of uridine at the wobble position (U34) of tRNA, leading to the formation of s(2)U34. The polypeptide is tRNA-specific 2-thiouridylase MnmA (Bartonella bacilliformis (strain ATCC 35685 / KC583 / Herrer 020/F12,63)).